The following is a 207-amino-acid chain: MEDPDLVATNLSPAGVKDLLRKDLDARDPWNISSCEYEQKRLHAIMELCLGGRTLGDVLEIGCAAGALTERLSIYSQSLTVVELMTEAIAKAQERVNNSDIIWHEQDVCQMDLNAKYDTIICTEVLYYIHEKERLRGALENIVQLLRSDGQFIFGSPRNAVCRSWGHLFGAEAVLELAQSRLRIVDLRRINGGLPGQDCVIAKLTRR.

The protein belongs to the NodS family.

SAM-utilizing methyltransferase involved in nod factor synthesis. This Azorhizobium caulinodans (strain ATCC 43989 / DSM 5975 / JCM 20966 / LMG 6465 / NBRC 14845 / NCIMB 13405 / ORS 571) protein is Nodulation protein S (nodS).